Here is a 639-residue protein sequence, read N- to C-terminus: Phosphomethylpyrimidine synthase (639 aa).

A disordered region spans residues 49-71 (DTPTDFGGEQNRPVRVYDTSGPY). Residues Asn231, Met260, Tyr289, His325, 345-347 (SRG), 386-389 (DGLR), and Glu425 each bind substrate. His429 lines the Zn(2+) pocket. A substrate-binding site is contributed by Tyr452. His493 contributes to the Zn(2+) binding site. Cys573, Cys576, and Cys581 together coordinate [4Fe-4S] cluster.

The protein belongs to the ThiC family. In terms of assembly, homodimer. [4Fe-4S] cluster serves as cofactor.

It catalyses the reaction 5-amino-1-(5-phospho-beta-D-ribosyl)imidazole + S-adenosyl-L-methionine = 4-amino-2-methyl-5-(phosphooxymethyl)pyrimidine + CO + 5'-deoxyadenosine + formate + L-methionine + 3 H(+). It functions in the pathway cofactor biosynthesis; thiamine diphosphate biosynthesis. Its function is as follows. Catalyzes the synthesis of the hydroxymethylpyrimidine phosphate (HMP-P) moiety of thiamine from aminoimidazole ribotide (AIR) in a radical S-adenosyl-L-methionine (SAM)-dependent reaction. The protein is Phosphomethylpyrimidine synthase of Teredinibacter turnerae (strain ATCC 39867 / T7901).